The primary structure comprises 92 residues: Small ribosomal subunit protein uS19 (92 aa).

Belongs to the universal ribosomal protein uS19 family.

Protein S19 forms a complex with S13 that binds strongly to the 16S ribosomal RNA. The sequence is that of Small ribosomal subunit protein uS19 from Bacillus mycoides (strain KBAB4) (Bacillus weihenstephanensis).